Here is a 349-residue protein sequence, read N- to C-terminus: tRNA N6-adenosine threonylcarbamoyltransferase (349 aa).

Residues histidine 117 and histidine 121 each contribute to the Fe cation site. Residues 139–143 (QVSGG), aspartate 172, glycine 185, aspartate 189, and asparagine 278 contribute to the substrate site. Position 310 (aspartate 310) interacts with Fe cation.

This sequence belongs to the KAE1 / TsaD family. The cofactor is Fe(2+).

It is found in the cytoplasm. The enzyme catalyses L-threonylcarbamoyladenylate + adenosine(37) in tRNA = N(6)-L-threonylcarbamoyladenosine(37) in tRNA + AMP + H(+). Required for the formation of a threonylcarbamoyl group on adenosine at position 37 (t(6)A37) in tRNAs that read codons beginning with adenine. Is involved in the transfer of the threonylcarbamoyl moiety of threonylcarbamoyl-AMP (TC-AMP) to the N6 group of A37, together with TsaE and TsaB. TsaD likely plays a direct catalytic role in this reaction. The polypeptide is tRNA N6-adenosine threonylcarbamoyltransferase (Lactobacillus acidophilus (strain ATCC 700396 / NCK56 / N2 / NCFM)).